The following is a 142-amino-acid chain: Protein CPn_0742/CP_0003/CPj0742/CpB0770 (142 aa).

Positions 115–142 (LHPTKESKRPKQKLSSTKKNKKKNWIPL) are disordered. Positions 124–142 (PKQKLSSTKKNKKKNWIPL) are enriched in basic residues.

It belongs to the chlamydial CPn_0742/CT_635/TC_0003 family.

This Chlamydia pneumoniae (Chlamydophila pneumoniae) protein is Protein CPn_0742/CP_0003/CPj0742/CpB0770.